We begin with the raw amino-acid sequence, 91 residues long: Small ribosomal subunit protein uS19 (91 aa).

The protein belongs to the universal ribosomal protein uS19 family.

Its function is as follows. Protein S19 forms a complex with S13 that binds strongly to the 16S ribosomal RNA. This Bordetella petrii (strain ATCC BAA-461 / DSM 12804 / CCUG 43448) protein is Small ribosomal subunit protein uS19.